The chain runs to 1391 residues: DNA-directed RNA polymerase subunit beta (1391 aa).

Belongs to the RNA polymerase beta chain family. The RNAP catalytic core consists of 2 alpha, 1 beta, 1 beta' and 1 omega subunit. When a sigma factor is associated with the core the holoenzyme is formed, which can initiate transcription.

It catalyses the reaction RNA(n) + a ribonucleoside 5'-triphosphate = RNA(n+1) + diphosphate. Functionally, DNA-dependent RNA polymerase catalyzes the transcription of DNA into RNA using the four ribonucleoside triphosphates as substrates. The polypeptide is DNA-directed RNA polymerase subunit beta (Paramagnetospirillum magneticum (strain ATCC 700264 / AMB-1) (Magnetospirillum magneticum)).